The primary structure comprises 155 residues: V-type proton ATPase 16 kDa proteolipid subunit c (155 aa).

At 1–10 the chain is on the lumenal side; the sequence is MSESKSGPEY. A helical transmembrane segment spans residues 11-33; the sequence is ASFFAVMGASAAMVFSALGAAYG. Topologically, residues 34–55 are cytoplasmic; that stretch reads TAKSGTGIAAMSVMRPEQIMKS. A helical membrane pass occupies residues 56 to 76; that stretch reads IIPVVMAGIIAIYGLVVAVLI. At 77-92 the chain is on the lumenal side; it reads ANSLNDDISLYKSFLQ. Residues 93–114 traverse the membrane as a helical segment; the sequence is LGAGLSVGLSGLAAGFAIGIVG. Residues 115–131 lie on the Cytoplasmic side of the membrane; the sequence is DAGVRGTAQQPRLFVGM. A helical transmembrane segment spans residues 132 to 152; the sequence is ILILIFAEVLGLYGLIVALIL. Topologically, residues 153-155 are lumenal; sequence STK.

The protein belongs to the V-ATPase proteolipid subunit family. As to quaternary structure, V-ATPase is a heteromultimeric enzyme made up of two complexes: the ATP-hydrolytic V1 complex and the proton translocation V0 complex. The V1 complex consists of three catalytic AB heterodimers that form a heterohexamer, three peripheral stalks each consisting of EG heterodimers, one central rotor including subunits D and F, and the regulatory subunits C and H. The proton translocation complex V0 consists of the proton transport subunit a, a ring of proteolipid subunits c9c'', rotary subunit d, subunits e and f, and the accessory subunits ATP6AP1/Ac45 and ATP6AP2/PRR. Interacts with the V0 complex V-ATPase subunit a4 ATP6V0A4. Interacts with LASS2. Interacts with RNF182; this interaction leads to ubiquitination and degradation via the proteasome pathway. In terms of assembly, (Microbial infection) Interacts with HTLV-1 accessory protein p12I. Ubiquitinated by RNF182, leading to its degradation via the ubiquitin-proteasome pathway.

It is found in the cytoplasmic vesicle. It localises to the clathrin-coated vesicle membrane. The protein resides in the secretory vesicle. The protein localises to the synaptic vesicle membrane. Its function is as follows. Proton-conducting pore forming subunit of the V0 complex of vacuolar(H+)-ATPase (V-ATPase), a multisubunit enzyme composed of a peripheral complex (V1) that hydrolyzes ATP and a membrane integral complex (V0) that translocates protons. V-ATPase is responsible for acidifying and maintaining the pH of intracellular compartments, and in some cell types, it is targeted to the plasma membrane, where it is responsible for acidifying the extracellular environment. This is V-type proton ATPase 16 kDa proteolipid subunit c (ATP6V0C) from Homo sapiens (Human).